A 335-amino-acid polypeptide reads, in one-letter code: Beta-hexosaminidase (335 aa).

Residues aspartate 60, arginine 68, arginine 133, and 163–164 contribute to the substrate site; that span reads KH. The active-site Proton donor/acceptor is histidine 176. Aspartate 247 serves as the catalytic Nucleophile.

Belongs to the glycosyl hydrolase 3 family. NagZ subfamily.

It localises to the cytoplasm. The enzyme catalyses Hydrolysis of terminal non-reducing N-acetyl-D-hexosamine residues in N-acetyl-beta-D-hexosaminides.. It functions in the pathway cell wall biogenesis; peptidoglycan recycling. Its function is as follows. Plays a role in peptidoglycan recycling by cleaving the terminal beta-1,4-linked N-acetylglucosamine (GlcNAc) from peptide-linked peptidoglycan fragments, giving rise to free GlcNAc, anhydro-N-acetylmuramic acid and anhydro-N-acetylmuramic acid-linked peptides. This Xylella fastidiosa (strain M23) protein is Beta-hexosaminidase.